A 413-amino-acid chain; its full sequence is MYSNNQRSRIGSHTWKIAFLFAFLALLVDGADLMLLSYSLNSIKAEFNLSTVEAGMLGSFTLAGMAIGGIFGGWACDRFGRVRIVVISILTFSILTCGLGLTQSFIQFGVLRFFASLGLGSLYIACNTLMAEYVPTKYRTTVLGTLQAGWTVGYIVATLLAGWLIPDHGWRVLFYVAIIPVLMAVLMHFFVPEPAAWQQSRLAPSKQTETVKTSAFKLIFQDKRNRNMFILWALTAGFLQFGYYGVNNWMPSYLESELGMKFKEMTAYMVGTYTAMILGKILAGFMADKLGRRFTYAFGAIGTAIFLPLIVFYNSPDNILYLLVIFGFLYGIPYGVNATYMTESFPTAIRGTAIGGAYNVGRLGAAIAPATIGFLASGGSIGLGFVVMGAAYFICGVIPALFIKEKQYDPQQS.

Residues 1–16 (MYSNNQRSRIGSHTWK) lie on the Cytoplasmic side of the membrane. A helical transmembrane segment spans residues 17 to 37 (IAFLFAFLALLVDGADLMLLS). Over 38-53 (YSLNSIKAEFNLSTVE) the chain is Periplasmic. The chain crosses the membrane as a helical span at residues 54–74 (AGMLGSFTLAGMAIGGIFGGW). Topologically, residues 75-85 (ACDRFGRVRIV) are cytoplasmic. A helical transmembrane segment spans residues 86–106 (VISILTFSILTCGLGLTQSFI). Over 107–112 (QFGVLR) the chain is Periplasmic. A helical membrane pass occupies residues 113–133 (FFASLGLGSLYIACNTLMAEY). Residues 134-145 (VPTKYRTTVLGT) are Cytoplasmic-facing. The helical transmembrane segment at 146-166 (LQAGWTVGYIVATLLAGWLIP) threads the bilayer. Residues 167–171 (DHGWR) lie on the Periplasmic side of the membrane. Residues 172-192 (VLFYVAIIPVLMAVLMHFFVP) traverse the membrane as a helical segment. At 193–228 (EPAAWQQSRLAPSKQTETVKTSAFKLIFQDKRNRNM) the chain is on the cytoplasmic side. A helical membrane pass occupies residues 229 to 249 (FILWALTAGFLQFGYYGVNNW). At 250–266 (MPSYLESELGMKFKEMT) the chain is on the periplasmic side. The chain crosses the membrane as a helical span at residues 267–287 (AYMVGTYTAMILGKILAGFMA). At 288 to 293 (DKLGRR) the chain is on the cytoplasmic side. A helical transmembrane segment spans residues 294-314 (FTYAFGAIGTAIFLPLIVFYN). The Periplasmic segment spans residues 315–318 (SPDN). The helical transmembrane segment at 319 to 339 (ILYLLVIFGFLYGIPYGVNAT) threads the bilayer. Over 340-352 (YMTESFPTAIRGT) the chain is Cytoplasmic. A helical transmembrane segment spans residues 353–376 (AIGGAYNVGRLGAAIAPATIGFLA). Over 377 to 382 (SGGSIG) the chain is Periplasmic. Residues 383-403 (LGFVVMGAAYFICGVIPALFI) traverse the membrane as a helical segment. At 404-413 (KEKQYDPQQS) the chain is on the cytoplasmic side.

Belongs to the major facilitator superfamily. Aromatic acid:H(+) symporter (AAHS) (TC 2.A.1.15) family.

The protein localises to the cell inner membrane. In terms of biological role, probable uptake of muconate. This is Cis,cis-muconate transport protein (mucK) from Acinetobacter baylyi (strain ATCC 33305 / BD413 / ADP1).